Consider the following 808-residue polypeptide: Potassium transporter 5 (808 aa).

Over 1 to 65 (MAEEVGETRG…NQVNWKKTLS (65 aa)) the chain is Cytoplasmic. Residues 66-86 (LTFQSIGVVYGDIGTSPLYVY) form a helical membrane-spanning segment. Residues 87-102 (ESTFPDKIGSKEDILG) are Extracellular-facing. Residues 103–123 (VLSLIIYTLVLLPMLKYVFIV) traverse the membrane as a helical segment. Topologically, residues 124 to 189 (LRANDNGDGG…EKMENSKNIK (66 aa)) are cytoplasmic. A helical membrane pass occupies residues 190 to 210 (ILLFLVTILGTSMVIGDGVLT). The Extracellular portion of the chain corresponds to 211–221 (PCISVLSAVSG). Residues 222–242 (IGSLGQDAVVGISIAILIVLF) form a helical membrane-spanning segment. Topologically, residues 243-251 (CAQRLGTDK) are cytoplasmic. Residues 252-272 (VGFSFAPIILLWFSFIGGIGL) traverse the membrane as a helical segment. Over 273–302 (YNLFKYDVSVLRAFNPKYMFDYFKRNGKQG) the chain is Extracellular. Residues 303–323 (WISLGGVVLAVTGTEAMFADL) form a helical membrane-spanning segment. Residues 324–327 (GHFN) lie on the Cytoplasmic side of the membrane. Residues 328–348 (VQAIQISFSGIVFPALLCAYA) form a helical membrane-spanning segment. Over 349–379 (GQAAYLTKFPDDVSKTFYKSIPDPLYWPTFV) the chain is Extracellular. The helical transmembrane segment at 380-400 (VAVAAAIIASQAMISGAFAII) threads the bilayer. Topologically, residues 401-424 (SQSLSLGCFPRVKVIHTSAKYEGQ) are cytoplasmic. The chain crosses the membrane as a helical span at residues 425 to 445 (VYIPEVNYILMIACIMVCLGF). The Extracellular segment spans residues 446–456 (KTTEKIGNAYG). The chain crosses the membrane as a helical span at residues 457–477 (IAVVAVMVITTCMVTIIMLVV). Over 478–482 (WRTKM) the chain is Cytoplasmic. The chain crosses the membrane as a helical span at residues 483-503 (IWIAFFFFGFICIEAVYLSSV). Residues 504 to 510 (LYKFKDG) are Extracellular-facing. Residues 511-531 (GFLPLAFSFFLMIIMGIWHYI) traverse the membrane as a helical segment. Over 532-808 (HKERYMYELK…LLRVGMTYEI (277 aa)) the chain is Cytoplasmic. A disordered region spans residues 699–722 (LQQPNPSRVSSGSIHSNSGIKSTK).

This sequence belongs to the HAK/KUP transporter (TC 2.A.72.3) family. As to expression, expressed in the roots.

The protein resides in the cell membrane. It catalyses the reaction K(+)(in) = K(+)(out). Its function is as follows. High-affinity potassium transporter that functions under low potassium conditions. Involved in the positive regulation of salt tolerance under salt stress. The sequence is that of Potassium transporter 5 from Manihot esculenta (Cassava).